The primary structure comprises 260 residues: Putative enoyl-CoA hydratase/isomerase YngF (260 aa).

Belongs to the enoyl-CoA hydratase/isomerase family.

The chain is Putative enoyl-CoA hydratase/isomerase YngF (yngF) from Bacillus subtilis (strain 168).